Here is a 270-residue protein sequence, read N- to C-terminus: Phosphatidylinositol transfer protein alpha isoform (270 aa).

A 1,2-diacyl-sn-glycero-3-phospho-(1D-myo-inositol) contacts are provided by T58, K60, E85, N89, T96, and K194. Position 215 is an N6-acetyllysine (K215).

It belongs to the PtdIns transfer protein family. PI transfer class I subfamily. In terms of processing, phosphorylated by PKC in a calcium and phosphatidylserine-dependent manner.

Its subcellular location is the cytoplasm. It is found in the nucleus. The enzyme catalyses a 1,2-diacyl-sn-glycero-3-phosphocholine(in) = a 1,2-diacyl-sn-glycero-3-phosphocholine(out). The catalysed reaction is a 1,2-diacyl-sn-glycero-3-phospho-(1D-myo-inositol)(in) = a 1,2-diacyl-sn-glycero-3-phospho-(1D-myo-inositol)(out). Its function is as follows. Catalyzes the transfer of phosphatidylinositol (PI) and phosphatidylcholine (PC) between membranes. Shows a preference for PI and PC containing shorter saturated or monosaturated acyl chains at the sn-1 and sn-2 positions. Preference order for PC is C16:1 &gt; C16:0 &gt; C18:1 &gt; C18:0 &gt; C20:4 and for PI is C16:1 &gt; C16:0 &gt; C18:1 &gt; C18:0 &gt; C20:4 &gt; C20:3. In Bos taurus (Bovine), this protein is Phosphatidylinositol transfer protein alpha isoform (PITPNA).